Reading from the N-terminus, the 424-residue chain is DNA repair protein Rad60 (424 aa).

Tyr26 is modified (phosphotyrosine). Ser32 and Ser34 each carry phosphoserine. The tract at residues 45 to 177 is disordered; the sequence is LPKKSTKTGK…LTTTTSNSAS (133 aa). The segment covering 48 to 57 has biased composition (basic residues); the sequence is KSTKTGKRKN. A compositionally biased stretch (basic and acidic residues) spans 77 to 93; it reads QAEHKAVEPEEDMRTER. Ser96 bears the Phosphoserine mark. Basic and acidic residues predominate over residues 104 to 123; sequence EMEKKNGQQSDVEKHAKEND. Positions 156-166 are enriched in basic residues; sequence KPKKRGQKKRT. Positions 167 to 177 are enriched in low complexity; that stretch reads SLTTTTSNSAS.

Forms a complex with dgrn; likely required for localization to the nuclear periphery. Interacts with the SMC5-SMC6 complex members SMC5 and SMC6/jnj following ionizing radiation (IR) to induce DNA damage. Interaction between the SMC5-SMC6 complex and the dgrn-Rad60 complex, may stabilize the association of heterochromatic DSBs with the nuclear periphery.

The protein resides in the nucleus. It localises to the nucleoplasm. Functionally, required for repair of DNA double strand breaks which occur during replication or are induced by ionizing radiation (IR). Functions with dgrn and downstream of the SMC5-SMC6 complex to regulate strand break repair. Likely functions by stabilizing the association of heterochromatic double strand breaks (DSBs) with the nuclear periphery as part of the homologous recombination (HR) repair process. The chain is DNA repair protein Rad60 from Drosophila melanogaster (Fruit fly).